Here is a 193-residue protein sequence, read N- to C-terminus: uncharacterized protein (193 aa).

This is an uncharacterized protein from Saccharomyces cerevisiae (strain ATCC 204508 / S288c) (Baker's yeast).